A 115-amino-acid polypeptide reads, in one-letter code: MSAALLLATLLMTGLGQVAQKLTVEHWRLVAADGWTARLRSPWPWLALLALGLGLLCWLLLLQRVEVGSAYPMLALNFVLVTLAARFVFDEPVDRRHLAGLLLIVAGVALLGRSA.

3 helical membrane passes run 42-62 (PWPW…LLLL), 65-85 (VEVG…TLAA), and 93-112 (VDRR…ALLG). An EamA domain is found at 46 to 113 (LALLALGLGL…IVAGVALLGR (68 aa)).

The protein belongs to the ArnE family. In terms of assembly, heterodimer of ArnE and ArnF.

It is found in the cell inner membrane. It participates in bacterial outer membrane biogenesis; lipopolysaccharide biosynthesis. In terms of biological role, translocates 4-amino-4-deoxy-L-arabinose-phosphoundecaprenol (alpha-L-Ara4N-phosphoundecaprenol) from the cytoplasmic to the periplasmic side of the inner membrane. This is Probable 4-amino-4-deoxy-L-arabinose-phosphoundecaprenol flippase subunit ArnE from Pseudomonas aeruginosa (strain LESB58).